The primary structure comprises 610 residues: Zinc metalloproteinase-disintegrin-like BITM06A (610 aa).

An N-terminal signal peptide occupies residues 1–20 (MIQVLLVTICLAAFPYQGSS). A propeptide spanning residues 21–189 (IILESGNVND…KKASQLVVTA (169 aa)) is cleaved from the precursor. The region spanning 198-394 (RYVELFIVVD…ENPQCILNEP (197 aa)) is the Peptidase M12B domain. Ca(2+) contacts are provided by Glu201 and Asp285. 3 cysteine pairs are disulfide-bonded: Cys309–Cys389, Cys349–Cys373, and Cys351–Cys356. Residue His334 participates in Zn(2+) binding. Glu335 is an active-site residue. Residues His338 and His344 each coordinate Zn(2+). N-linked (GlcNAc...) asparagine glycosylation is present at Asn372. Residues Cys389, Asn392, Val404, Asn407, Leu409, Glu411, Glu414, and Asp417 each contribute to the Ca(2+) site. A Disintegrin domain is found at 402-488 (PPVCGNELLE…ECPADVFHKN (87 aa)). Cystine bridges form between Cys405/Cys434, Cys416/Cys429, Cys418/Cys424, Cys428/Cys451, Cys442/Cys448, Cys447/Cys473, Cys460/Cys480, Cys467/Cys499, Cys492/Cys504, Cys511/Cys561, Cys526/Cys572, Cys539/Cys549, Cys556/Cys598, and Cys592/Cys603. A D/ECD-tripeptide motif is present at residues 466-468 (ECD). Positions 468, 469, 471, 483, and 484 each coordinate Ca(2+).

It belongs to the venom metalloproteinase (M12B) family. P-III subfamily. P-IIIa sub-subfamily. As to quaternary structure, monomer. Requires Zn(2+) as cofactor. Expressed by the venom gland.

The protein resides in the secreted. Functionally, snake venom metalloproteinase that impairs hemostasis in the envenomed animal. The sequence is that of Zinc metalloproteinase-disintegrin-like BITM06A from Bothrops insularis (Golden lancehead).